A 424-amino-acid chain; its full sequence is Poly-cysteine and histidine-tailed protein (424 aa).

The first 17 residues, 1–17 (MAFSTIVVLFVAAVGFG), serve as a signal peptide directing secretion. N291 is a glycosylation site (N-linked (GlcNAc...) asparagine). Residues 372-390 (VGGKKQQKDQPESEKKAEN) are compositionally biased toward basic and acidic residues. Residues 372–424 (VGGKKQQKDQPESEKKAENMPETTGNASHHQHRHHHGDSSSESHEQHHHHHHH) are disordered. A glycan (N-linked (GlcNAc...) asparagine) is linked at N397.

In terms of processing, glycosylated. In terms of tissue distribution, expressed in larval tissues like cuticle, hypodermis and muscle (at protein level). Note=Not excreted into striated muscle fibers or nurse cell.

It is found in the secreted. Its function is as follows. Binds iron and zinc. May bind nickel. This is Poly-cysteine and histidine-tailed protein from Trichinella spiralis (Trichina worm).